A 400-amino-acid polypeptide reads, in one-letter code: MSESVRTNTSIWSKGMLSVIVAQFLSAFGDNALLFATLALLKAQFYPDWSQPVLQMVFVGAYILFAPFVGQIADSFAKGRVMMVANGLKLAGAAGICLGVNPFVGYTLVGIGAAAYSPAKYGILGELTTGDKLVKANGLMEASTIAAILLGSVAGGVLADWHVIAALVACALAYAGAVAANLFIPKLVAARPGQSWRLSAMTRSFFCACVVLWRNGETRFSLVGTGLFWGAGVTLRFLLVLWVPVALGITDNATPTYLNAMVAVGIVVGAGAAAKLVTLETVSRCMPAGILIGVVVAIFSLQHALLPAYALLLLIGMLGGFFVVPLNALLQERGKKSVGAGNAIAVQNLGENSAMLLMLGLYSLAVLVGVPAVAIGIGFGVLFALAIAALWIWQRRQASY.

Transmembrane regions (helical) follow at residues 19–39 (VIVA…ATLA), 53–73 (VLQM…GQIA), 91–111 (AGAA…LVGI), 139–159 (LMEA…GVLA), 164–184 (IAAL…NLFI), 195–213 (SWRL…VVLW), 227–247 (LFWG…PVAL), 257–277 (YLNA…AKLV), 281–301 (TVSR…IFSL), 304–324 (ALLP…FFVV), 352–372 (NSAM…GVPA), and 373–393 (VAIG…LWIW).

The protein belongs to the major facilitator superfamily. LplT (TC 2.A.1.42) family.

Its subcellular location is the cell inner membrane. Functionally, catalyzes the facilitated diffusion of 2-acyl-glycero-3-phosphoethanolamine (2-acyl-GPE) into the cell. The protein is Lysophospholipid transporter LplT of Salmonella typhi.